The sequence spans 505 residues: Lysine--tRNA ligase, heat inducible (505 aa).

An N6-acetyllysine mark is found at lysine 114 and lysine 156. Positions 415 and 422 each coordinate Mg(2+).

The protein belongs to the class-II aminoacyl-tRNA synthetase family. As to quaternary structure, homodimer. Mg(2+) is required as a cofactor.

It localises to the cytoplasm. The enzyme catalyses tRNA(Lys) + L-lysine + ATP = L-lysyl-tRNA(Lys) + AMP + diphosphate. This Escherichia coli O157:H7 protein is Lysine--tRNA ligase, heat inducible (lysU).